Here is a 155-residue protein sequence, read N- to C-terminus: Transmembrane protein C1orf162 (155 aa).

The interval methionine 1–alanine 28 is disordered. Positions serine 19 to alanine 28 are enriched in low complexity. The chain crosses the membrane as a helical span at residues isoleucine 41–isoleucine 61. Residues alanine 92 to proline 114 are disordered. Phosphoserine is present on serine 140.

The protein localises to the membrane. This chain is Transmembrane protein C1orf162 (C1orf162), found in Homo sapiens (Human).